Reading from the N-terminus, the 291-residue chain is Acetyl-coenzyme A carboxylase carboxyl transferase subunit beta (291 aa).

The CoA carboxyltransferase N-terminal domain occupies 29–291 (IMTKCPQCKK…TGGEREWLEN (263 aa)). Residues C33, C36, C52, and C55 each contribute to the Zn(2+) site. A C4-type zinc finger spans residues 33 to 55 (CPQCKKIMLTKELDKNLRVCMNC).

Belongs to the AccD/PCCB family. In terms of assembly, acetyl-CoA carboxylase is a heterohexamer composed of biotin carboxyl carrier protein (AccB), biotin carboxylase (AccC) and two subunits each of ACCase subunit alpha (AccA) and ACCase subunit beta (AccD). The cofactor is Zn(2+).

Its subcellular location is the cytoplasm. The catalysed reaction is N(6)-carboxybiotinyl-L-lysyl-[protein] + acetyl-CoA = N(6)-biotinyl-L-lysyl-[protein] + malonyl-CoA. Its pathway is lipid metabolism; malonyl-CoA biosynthesis; malonyl-CoA from acetyl-CoA: step 1/1. Component of the acetyl coenzyme A carboxylase (ACC) complex. Biotin carboxylase (BC) catalyzes the carboxylation of biotin on its carrier protein (BCCP) and then the CO(2) group is transferred by the transcarboxylase to acetyl-CoA to form malonyl-CoA. The chain is Acetyl-coenzyme A carboxylase carboxyl transferase subunit beta from Bacillus pumilus (strain SAFR-032).